Consider the following 141-residue polypeptide: Probable trafficking protein particle complex subunit 2 (141 aa).

It belongs to the TRAPP small subunits family. Sedlin subfamily. Part of the multisubunit TRAPP (transport protein particle) complex.

It localises to the cytoplasm. Its subcellular location is the perinuclear region. The protein localises to the endoplasmic reticulum. The protein resides in the golgi apparatus. In terms of biological role, may play a role in vesicular transport from endoplasmic reticulum to Golgi. Required for the systemic spread of the RNAi response. The polypeptide is Probable trafficking protein particle complex subunit 2 (sedl-1) (Caenorhabditis elegans).